A 241-amino-acid polypeptide reads, in one-letter code: Probable transcriptional regulatory protein LMOf2365_1554 (241 aa).

Residues 1–14 are compositionally biased toward polar residues; that stretch reads MSGHSKWNNIQGRK. A disordered region spans residues 1 to 22; it reads MSGHSKWNNIQGRKNAQDSKRS.

It belongs to the TACO1 family.

Its subcellular location is the cytoplasm. In Listeria monocytogenes serotype 4b (strain F2365), this protein is Probable transcriptional regulatory protein LMOf2365_1554.